A 333-amino-acid chain; its full sequence is DNA-directed RNA polymerase subunit alpha (333 aa).

Positions 1–246 are alpha N-terminal domain (alpha-NTD); the sequence is MEKFIKINWT…AHLNIIGDVN (246 aa). The alpha C-terminal domain (alpha-CTD) stretch occupies residues 263–333; sequence HSKTQNILIQ…YNVFLDKGEE (71 aa).

It belongs to the RNA polymerase alpha chain family. Homodimer. The RNAP catalytic core consists of 2 alpha, 1 beta, 1 beta' and 1 omega subunit. When a sigma factor is associated with the core the holoenzyme is formed, which can initiate transcription.

The enzyme catalyses RNA(n) + a ribonucleoside 5'-triphosphate = RNA(n+1) + diphosphate. In terms of biological role, DNA-dependent RNA polymerase catalyzes the transcription of DNA into RNA using the four ribonucleoside triphosphates as substrates. The protein is DNA-directed RNA polymerase subunit alpha of Mycoplasma mobile (strain ATCC 43663 / 163K / NCTC 11711) (Mesomycoplasma mobile).